Here is a 548-residue protein sequence, read N- to C-terminus: Probable malate:quinone oxidoreductase (548 aa).

Residues 521 to 548 (DKPQAADSTPKPQLKPQPVQKEVADIAL) form a disordered region. Residues 530–541 (PKPQLKPQPVQK) are compositionally biased toward low complexity.

The protein belongs to the MQO family. FAD is required as a cofactor.

The catalysed reaction is (S)-malate + a quinone = a quinol + oxaloacetate. It functions in the pathway carbohydrate metabolism; tricarboxylic acid cycle; oxaloacetate from (S)-malate (quinone route): step 1/1. This chain is Probable malate:quinone oxidoreductase, found in Escherichia coli (strain UTI89 / UPEC).